The sequence spans 482 residues: Glycogen synthase (482 aa).

Residue lysine 20 coordinates ADP-alpha-D-glucose.

Belongs to the glycosyltransferase 1 family. Bacterial/plant glycogen synthase subfamily.

The catalysed reaction is [(1-&gt;4)-alpha-D-glucosyl](n) + ADP-alpha-D-glucose = [(1-&gt;4)-alpha-D-glucosyl](n+1) + ADP + H(+). It functions in the pathway glycan biosynthesis; glycogen biosynthesis. Synthesizes alpha-1,4-glucan chains using ADP-glucose. This is Glycogen synthase from Aliivibrio salmonicida (strain LFI1238) (Vibrio salmonicida (strain LFI1238)).